A 144-amino-acid polypeptide reads, in one-letter code: Large ribosomal subunit protein uL16 (144 aa).

This sequence belongs to the universal ribosomal protein uL16 family. Part of the 50S ribosomal subunit.

Its function is as follows. Binds 23S rRNA and is also seen to make contacts with the A and possibly P site tRNAs. This Thermoanaerobacter sp. (strain X514) protein is Large ribosomal subunit protein uL16.